We begin with the raw amino-acid sequence, 229 residues long: UPF0173 metal-dependent hydrolase RD1_1994 (229 aa).

It belongs to the UPF0173 family.

The sequence is that of UPF0173 metal-dependent hydrolase RD1_1994 from Roseobacter denitrificans (strain ATCC 33942 / OCh 114) (Erythrobacter sp. (strain OCh 114)).